The chain runs to 1035 residues: POM121-like protein 2 (1035 aa).

Disordered stretches follow at residues 1–37 (MGSFLSKLELSPSSPAQVRTDLPERPTKRRPPQPLHQ), 177–213 (LFPESLDSKRRSPETRPSAFKPLMKNGTLTSFVPRPG), 286–343 (IKKE…LGYA), 415–508 (LGPL…QSTL), 754–791 (SPLGSSSRPPFPLSQGANPQPAFGATNGQKQGPSQPAL), and 972–1035 (NTPV…AYKK). Positions 27 to 37 (TKRRPPQPLHQ) are enriched in basic residues. Positions 309–319 (GGSESSGQQNQ) are enriched in low complexity. Composition is skewed to polar residues over residues 320 to 330 (KIPQLPSSPEN), 420 to 431 (SPQSTGEATSVA), and 445 to 462 (GCSQSELLPGTSPDSKPT). The segment covering 464–481 (TFILLTPTSPTLPVTDTT) has biased composition (low complexity). Residues 493 to 502 (PMPPDPPAPP) show a composition bias toward pro residues. Over residues 1000 to 1016 (RGPFRSSASSFSIGAKS) the composition is skewed to low complexity. Positions 1017-1035 (KTPKNREKGHSRRHHAYKK) are enriched in basic residues.

The protein belongs to the POM121 family.

In Homo sapiens (Human), this protein is POM121-like protein 2 (POM121L2).